Here is a 422-residue protein sequence, read N- to C-terminus: L-threonine dehydratase biosynthetic IlvA (422 aa).

Lys56 is modified (N6-(pyridoxal phosphate)lysine). Pyridoxal 5'-phosphate is bound by residues Asn83, Gly189–Leu193, and Ser315. The ACT-like domain occupies His339–Glu413.

The protein belongs to the serine/threonine dehydratase family. Homotetramer. The cofactor is pyridoxal 5'-phosphate.

It carries out the reaction L-threonine = 2-oxobutanoate + NH4(+). It functions in the pathway amino-acid biosynthesis; L-isoleucine biosynthesis; 2-oxobutanoate from L-threonine: step 1/1. Functionally, catalyzes the anaerobic formation of alpha-ketobutyrate and ammonia from threonine in a two-step reaction. The first step involved a dehydration of threonine and a production of enamine intermediates (aminocrotonate), which tautomerizes to its imine form (iminobutyrate). Both intermediates are unstable and short-lived. The second step is the nonenzymatic hydrolysis of the enamine/imine intermediates to form 2-ketobutyrate and free ammonia. In the low water environment of the cell, the second step is accelerated by RidA. In Staphylococcus aureus (strain Mu50 / ATCC 700699), this protein is L-threonine dehydratase biosynthetic IlvA (ilvA).